A 234-amino-acid chain; its full sequence is Phosphoglycolate phosphatase (234 aa).

The active-site Nucleophile is aspartate 8. Mg(2+) contacts are provided by aspartate 8 and aspartate 10. Position 157 (lysine 157) interacts with substrate. Mg(2+) is bound by residues aspartate 180 and aspartate 184.

It belongs to the archaeal SPP-like hydrolase family. The cofactor is Mg(2+).

It carries out the reaction 2-phosphoglycolate + H2O = glycolate + phosphate. Its function is as follows. Catalyzes the dephosphorylation of 2-phosphoglycolate. The polypeptide is Phosphoglycolate phosphatase (Methanoculleus marisnigri (strain ATCC 35101 / DSM 1498 / JR1)).